The primary structure comprises 280 residues: Biotin carboxyl carrier protein of acetyl-CoA carboxylase 1, chloroplastic (280 aa).

Residues 1-82 (MASSSFSVTS…SNAAKVDGPS (82 aa)) constitute a chloroplast transit peptide. Residues 52 to 75 (PSRSSYPVVKAQSNKVSTGASSNA) are compositionally biased toward polar residues. Disordered stretches follow at residues 52–106 (PSRS…ATEE) and 164–215 (QPSY…GTFY). Residues 177–188 (PAAAAPAPSTPA) show a composition bias toward low complexity. A compositionally biased stretch (pro residues) spans 189–198 (SLPPPSPPTP). In terms of domain architecture, Biotinyl-binding spans 203 to 279 (LPTVKSPMAG…SLDTPLFVVQ (77 aa)). Lys245 carries the post-translational modification N6-biotinyllysine.

Acetyl-CoA carboxylase is a heterohexamer composed of biotin carboxyl carrier protein, biotin carboxylase and 2 subunits each of ACCase subunit alpha and ACCase plastid-coded subunit beta (accD). As to expression, present in developing tissues from roots, leaves, flowers, siliques and seeds (at protein level).

The protein resides in the plastid. It localises to the chloroplast. It functions in the pathway lipid metabolism; fatty acid biosynthesis. Its function is as follows. This protein is a component of the acetyl coenzyme A carboxylase complex; first, biotin carboxylase catalyzes the carboxylation of the carrier protein and then the transcarboxylase transfers the carboxyl group to form malonyl-CoA. The protein is Biotin carboxyl carrier protein of acetyl-CoA carboxylase 1, chloroplastic (BCCP1) of Arabidopsis thaliana (Mouse-ear cress).